The following is a 256-amino-acid chain: Thiazole synthase (256 aa).

Residue K95 is the Schiff-base intermediate with DXP of the active site. 1-deoxy-D-xylulose 5-phosphate is bound by residues G156, 182–183 (AG), and 204–205 (NT).

Belongs to the ThiG family. In terms of assembly, homotetramer. Forms heterodimers with either ThiH or ThiS.

It is found in the cytoplasm. It catalyses the reaction [ThiS sulfur-carrier protein]-C-terminal-Gly-aminoethanethioate + 2-iminoacetate + 1-deoxy-D-xylulose 5-phosphate = [ThiS sulfur-carrier protein]-C-terminal Gly-Gly + 2-[(2R,5Z)-2-carboxy-4-methylthiazol-5(2H)-ylidene]ethyl phosphate + 2 H2O + H(+). Its pathway is cofactor biosynthesis; thiamine diphosphate biosynthesis. Catalyzes the rearrangement of 1-deoxy-D-xylulose 5-phosphate (DXP) to produce the thiazole phosphate moiety of thiamine. Sulfur is provided by the thiocarboxylate moiety of the carrier protein ThiS. In vitro, sulfur can be provided by H(2)S. The protein is Thiazole synthase of Shigella dysenteriae serotype 1 (strain Sd197).